Here is a 258-residue protein sequence, read N- to C-terminus: Imidazole glycerol phosphate synthase subunit HisF (258 aa).

Residues D11 and D130 contribute to the active site.

Belongs to the HisA/HisF family. In terms of assembly, heterodimer of HisH and HisF.

The protein resides in the cytoplasm. The enzyme catalyses 5-[(5-phospho-1-deoxy-D-ribulos-1-ylimino)methylamino]-1-(5-phospho-beta-D-ribosyl)imidazole-4-carboxamide + L-glutamine = D-erythro-1-(imidazol-4-yl)glycerol 3-phosphate + 5-amino-1-(5-phospho-beta-D-ribosyl)imidazole-4-carboxamide + L-glutamate + H(+). The protein operates within amino-acid biosynthesis; L-histidine biosynthesis; L-histidine from 5-phospho-alpha-D-ribose 1-diphosphate: step 5/9. Functionally, IGPS catalyzes the conversion of PRFAR and glutamine to IGP, AICAR and glutamate. The HisF subunit catalyzes the cyclization activity that produces IGP and AICAR from PRFAR using the ammonia provided by the HisH subunit. In Xanthomonas campestris pv. campestris (strain B100), this protein is Imidazole glycerol phosphate synthase subunit HisF.